The sequence spans 379 residues: DNA replication and repair protein RecF (379 aa).

An ATP-binding site is contributed by glycine 34–threonine 41.

Belongs to the RecF family.

Its subcellular location is the cytoplasm. The RecF protein is involved in DNA metabolism; it is required for DNA replication and normal SOS inducibility. RecF binds preferentially to single-stranded, linear DNA. It also seems to bind ATP. This is DNA replication and repair protein RecF from Mesorhizobium japonicum (strain LMG 29417 / CECT 9101 / MAFF 303099) (Mesorhizobium loti (strain MAFF 303099)).